Here is a 274-residue protein sequence, read N- to C-terminus: NH(3)-dependent NAD(+) synthetase (274 aa).

Position 46-53 (46-53 (GISGGQDS)) interacts with ATP. Residue aspartate 52 coordinates Mg(2+). Residue arginine 140 participates in deamido-NAD(+) binding. Threonine 160 contributes to the ATP binding site. Position 165 (glutamate 165) interacts with Mg(2+). 2 residues coordinate deamido-NAD(+): lysine 173 and aspartate 180. ATP-binding residues include lysine 189 and threonine 211. 260-261 (HK) serves as a coordination point for deamido-NAD(+).

Belongs to the NAD synthetase family. As to quaternary structure, homodimer.

It carries out the reaction deamido-NAD(+) + NH4(+) + ATP = AMP + diphosphate + NAD(+) + H(+). It participates in cofactor biosynthesis; NAD(+) biosynthesis; NAD(+) from deamido-NAD(+) (ammonia route): step 1/1. In terms of biological role, catalyzes the ATP-dependent amidation of deamido-NAD to form NAD. Uses ammonia as a nitrogen source. This Lactococcus lactis subsp. lactis (strain IL1403) (Streptococcus lactis) protein is NH(3)-dependent NAD(+) synthetase.